The chain runs to 279 residues: Coiled-coil domain-containing protein 106 (279 aa).

Residues 62–101 (KAQLHMALERNSWLQKRIEDLEEERDFLRCQLDKFISSAR) adopt a coiled-coil conformation. Basic and acidic residues predominate over residues 109–121 (RMKPGPRRVDGDS). The interval 109–173 (RMKPGPRRVD…FGKTKARERQ (65 aa)) is disordered. A Phosphoserine modification is found at Ser129. The Bipartite nuclear localization signal signature appears at 151 to 164 (KRQKQKGSTSRKRF). The span at 151-167 (KRQKQKGSTSRKRFGKT) shows a compositional bias: basic residues.

As to quaternary structure, interacts with p53/TP53.

It is found in the nucleus. In terms of biological role, promotes the degradation of p53/TP53 protein and inhibits its transactivity. This is Coiled-coil domain-containing protein 106 (Ccdc106) from Mus musculus (Mouse).